The following is a 660-amino-acid chain: Peroxisomal acyl-coenzyme A oxidase 1 (660 aa).

Serine 26 is modified (phosphoserine). An N6-succinyllysine mark is found at lysine 89 and lysine 90. FAD-binding residues include threonine 139 and glycine 178. At lysine 216 the chain carries N6-acetyllysine. Position 241 is an N6-succinyllysine (lysine 241). N6-acetyllysine occurs at positions 255, 267, and 272. At lysine 349 the chain carries N6-succinyllysine. The active-site Proton acceptor is glutamate 421. Lysine 437 and lysine 446 each carry N6-acetyllysine; alternate. An N6-succinyllysine; alternate mark is found at lysine 437 and lysine 446. The residue at position 500 (lysine 500) is an N6-acetyllysine. N6-acetyllysine; alternate is present on lysine 512. N6-succinyllysine; alternate is present on lysine 512. Lysine 542 carries the N6-succinyllysine modification. Position 637 is an N6-acetyllysine; alternate (lysine 637). Lysine 637 bears the N6-succinyllysine; alternate mark. N6-succinyllysine is present on lysine 643. Position 649 is a phosphoserine (serine 649). At lysine 651 the chain carries N6-acetyllysine. The residue at position 654 (lysine 654) is an N6-succinyllysine. A Microbody targeting signal motif is present at residues 658 to 660; that stretch reads SKL.

The protein belongs to the acyl-CoA oxidase family. In terms of assembly, homodimer. Interacts with LONP2. FAD is required as a cofactor.

It is found in the peroxisome. The catalysed reaction is a 2,3-saturated acyl-CoA + O2 = a (2E)-enoyl-CoA + H2O2. The enzyme catalyses hexadecanoyl-CoA + O2 = (2E)-hexadecenoyl-CoA + H2O2. It catalyses the reaction dodecanoyl-CoA + O2 = (2E)-dodecenoyl-CoA + H2O2. It carries out the reaction octanoyl-CoA + O2 = (2E)-octenoyl-CoA + H2O2. The catalysed reaction is decanoyl-CoA + O2 = (2E)-decenoyl-CoA + H2O2. The enzyme catalyses tetradecanoyl-CoA + O2 = (2E)-tetradecenoyl-CoA + H2O2. It catalyses the reaction hexadecanedioyl-CoA + O2 = (2E)-hexadecenedioyl-CoA + H2O2. It carries out the reaction tetracosanoyl-CoA + O2 = (2E)-tetracosenoyl-CoA + H2O2. The catalysed reaction is glutaryl-CoA + O2 = (2E)-glutaconyl-CoA + H2O2. The enzyme catalyses hexanoyl-CoA + O2 = (2E)-hexenoyl-CoA + H2O2. It catalyses the reaction octadecanoyl-CoA + O2 = (2E)-octadecenoyl-CoA + H2O2. It carries out the reaction (5Z,8Z,11Z,14Z,17Z)-eicosapentaenoyl-CoA + O2 = (2E,5Z,8Z,11Z,14Z,17Z)-icosahexaenoyl-CoA + H2O2. The catalysed reaction is (6Z,9Z,12Z,15Z,18Z,21Z)-tetracosahexaenoyl-CoA + O2 = (2E,6Z,9Z,12Z,15Z,18Z,21Z)-tetracosaheptaenoyl-CoA + H2O2. It functions in the pathway lipid metabolism; peroxisomal fatty acid beta-oxidation. In terms of biological role, involved in the initial and rate-limiting step of peroxisomal beta-oxidation of straight-chain saturated and unsaturated very-long-chain fatty acids. Catalyzes the desaturation of fatty acyl-CoAs such as palmitoyl-CoA (hexadecanoyl-CoA) to 2-trans-enoyl-CoAs ((2E)-enoyl-CoAs) such as (2E)-hexadecenoyl-CoA, and donates electrons directly to molecular oxygen (O(2)), thereby producing hydrogen peroxide (H(2)O(2)). Shows highest activity against medium-chain fatty acyl-CoAs. Shows optimum activity with a chain length of 10 carbons (decanoyl-CoA) in vitro. Functionally, is active against a much broader range of substrates and shows activity towards long-chain acyl-CoAs. The chain is Peroxisomal acyl-coenzyme A oxidase 1 from Pongo abelii (Sumatran orangutan).